A 349-amino-acid polypeptide reads, in one-letter code: Glycerol-3-phosphate dehydrogenase [NAD(+)], cytoplasmic (349 aa).

Residue 10–15 coordinates NAD(+); sequence GSGNWG. A substrate-binding site is contributed by K120. A153 lines the NAD(+) pocket. The active-site Proton acceptor is the K204. R269 is a binding site for NAD(+). Residue 269-270 coordinates substrate; sequence RN. K289 bears the N6-succinyllysine mark. Residues K296 and Q298 each coordinate NAD(+). At Y326 the chain carries Phosphotyrosine.

Belongs to the NAD-dependent glycerol-3-phosphate dehydrogenase family. As to quaternary structure, homodimer.

It localises to the cytoplasm. The enzyme catalyses sn-glycerol 3-phosphate + NAD(+) = dihydroxyacetone phosphate + NADH + H(+). Functionally, has glycerol-3-phosphate dehydrogenase activity. The chain is Glycerol-3-phosphate dehydrogenase [NAD(+)], cytoplasmic (GPD1) from Bos taurus (Bovine).